Consider the following 1198-residue polypeptide: Rac guanine nucleotide exchange factor B (1198 aa).

Residues 1–104 (MFSNFFGSSK…QHQGVITSLQ (104 aa)) form a disordered region. Low complexity predominate over residues 8 to 20 (SSKRNTIASSSSS). Basic and acidic residues predominate over residues 21–34 (SKKDKDNGKDESSK). The segment covering 35 to 58 (LKNSGSSTLPKPITNNESGNNFIT) has biased composition (polar residues). Residues 59–97 (SPSVSSPLISPLSSSPSPLLSSSSNSIQSTSHQQQQQHQ) are compositionally biased toward low complexity. In terms of domain architecture, Calponin-homology (CH) 1 spans 126–232 (SSLEQTARKW…NIVVLGKHAS (107 aa)). Residues 260 to 284 (FGGNHNNNNNNNNNNNTSNGDLSPV) are disordered. A compositionally biased stretch (low complexity) spans 263–275 (NHNNNNNNNNNNN). Calponin-homology (CH) domains lie at 341-449 (PELQ…NKMY) and 511-619 (PEDM…ENFD). Positions 632 to 846 (RRQKVIEEII…KRVADHVNES (215 aa)) constitute a DH domain. A PH domain is found at 876-1026 (TYIREGFLEI…WMEDLRSCLQ (151 aa)). Over residues 940 to 952 (GEACVDGDDDGGE) the composition is skewed to acidic residues. 2 disordered regions span residues 940–989 (GEAC…SNKS) and 1076–1198 (NNNN…IDNQ). Composition is skewed to low complexity over residues 977-989 (NSNN…SNKS) and 1076-1118 (NNNN…NNND). Acidic residues predominate over residues 1155-1167 (DETISDTESDDYE). A compositionally biased stretch (polar residues) spans 1188-1198 (FSDTIKNIDNQ).

As to quaternary structure, binds to F-actin.

The protein resides in the late endosome. In terms of biological role, involved in the regulation of the late steps of the endocytic pathway. This Dictyostelium discoideum (Social amoeba) protein is Rac guanine nucleotide exchange factor B (gxcB).